The following is a 540-amino-acid chain: Putative actin-fragmin kinase DDB_G0287957 (540 aa).

The stretch at 27-68 (KNENLNIKNEILNNNNNNNNNKNNNNNNNNNNNIENNSKNEN) forms a coiled coil. Disordered stretches follow at residues 37–70 (ILNN…ENFN) and 317–341 (NNNN…INNC).

Belongs to the protein kinase superfamily. AFK Ser/Thr protein kinase family.

The sequence is that of Putative actin-fragmin kinase DDB_G0287957 from Dictyostelium discoideum (Social amoeba).